The sequence spans 247 residues: Homeobox-leucine zipper protein HOX15 (247 aa).

Residues 1 to 44 (MAQDDEDVGLALGLSLGSGGHRRQRESRDEAPSSAAASLLTLRL) are disordered. Positions 32–44 (PSSAAASLLTLRL) are enriched in low complexity. A DNA-binding region (homeobox) is located at residues 91 to 150 (NSRKKLRLSKEQSALLEDRFKEHSTLNPKQKVALAKQLNLRPRQVEVWFQNRRARTKLKQ). The interval 149–193 (KQTEVDCELLKRCCETLTEENRRLHRELQQLRALTHSTAAGFFMA) is leucine-zipper. Residues 221 to 247 (SPTAAADRTNKPTAPHLFSPFAKSAAC) are disordered.

This sequence belongs to the HD-ZIP homeobox family. Class II subfamily. As to expression, expressed in seedlings, stems, leaf blades and panicles.

It localises to the nucleus. Probable transcription factor. In Oryza sativa subsp. japonica (Rice), this protein is Homeobox-leucine zipper protein HOX15 (HOX15).